The chain runs to 235 residues: Clathrin light chain A (235 aa).

The segment at 1-32 (MAELDPFGAPAGAPGGPALGNGVAGAGEEDPA) is disordered. Residues 13–25 (APGGPALGNGVAG) are compositionally biased toward gly residues. Residues 99–161 (VDRLQSEPES…QLQKTKANNR (63 aa)) form an involved in binding clathrin heavy chain region. Serine 104 and serine 193 each carry phosphoserine. An N6-acetyllysine modification is found at lysine 210. Serine 223 is subject to Phosphoserine. Position 229 is an N6-acetyllysine (lysine 229).

It belongs to the clathrin light chain family. As to quaternary structure, clathrin coats are formed from molecules containing 3 heavy chains and 3 light chains. Interacts with CALY; the interaction stimulates clathrin self-assembly and clathrin-mediated endocytosis. Interacts with CKAP5 and TACC3 forming the TACC3/ch-TOG/clathrin complex located at spindle inter-microtubules bridges; the complex implicates clathrin triskelions.

It localises to the cytoplasmic vesicle membrane. It is found in the membrane. The protein resides in the coated pit. The protein localises to the cytoplasm. Its subcellular location is the cytoskeleton. It localises to the spindle. Clathrin is the major protein of the polyhedral coat of coated pits and vesicles. Acts as a component of the TACC3/ch-TOG/clathrin complex proposed to contribute to stabilization of kinetochore fibers of the mitotic spindle by acting as inter-microtubule bridge. The polypeptide is Clathrin light chain A (Clta) (Mus musculus (Mouse)).